The sequence spans 243 residues: Probable transcriptional regulator ycf27 (243 aa).

One can recognise a Response regulatory domain in the interval 7-120 (KILVVDDEAS…ELEARIRSVL (114 aa)). Position 56 is a 4-aspartylphosphate (Asp56). Positions 76 to 94 (DVPIIMLTALGEVCDRITG) form a DNA-binding region, H-T-H motif. Residues 135-236 (SGIISIGFLK…ARGTGYLFQR (102 aa)) constitute a DNA-binding region (ompR/PhoB-type).

The protein resides in the plastid. The protein localises to the chloroplast. Probable promoter-specific protein mediating the interaction between DNA and RNA polymerase. In Pyropia yezoensis (Susabi-nori), this protein is Probable transcriptional regulator ycf27 (ycf27).